The chain runs to 469 residues: UDP-N-acetylmuramate--L-alanine ligase (469 aa).

Residue 120–126 (GTHGKTT) coordinates ATP.

It belongs to the MurCDEF family.

It is found in the cytoplasm. It catalyses the reaction UDP-N-acetyl-alpha-D-muramate + L-alanine + ATP = UDP-N-acetyl-alpha-D-muramoyl-L-alanine + ADP + phosphate + H(+). It participates in cell wall biogenesis; peptidoglycan biosynthesis. Functionally, cell wall formation. In Acetivibrio thermocellus (strain ATCC 27405 / DSM 1237 / JCM 9322 / NBRC 103400 / NCIMB 10682 / NRRL B-4536 / VPI 7372) (Clostridium thermocellum), this protein is UDP-N-acetylmuramate--L-alanine ligase.